Consider the following 284-residue polypeptide: Putative transcription factor kapC (284 aa).

Residues 1–10 show a composition bias toward pro residues; sequence MQPTLAPAPH. The disordered stretch occupies residues 1-121; it reads MQPTLAPAPH…NRAAQRAFRQ (121 aa). Low complexity predominate over residues 26-40; that stretch reads HDQLLAAHQHLSHPQ. A compositionally biased stretch (pro residues) spans 41 to 54; that stretch reads QPRPQPPAAQPPHM. A compositionally biased stretch (polar residues) spans 57–67; that stretch reads NTTSPRDQNNI. Residues 102–165 form the bZIP domain; sequence PLSTSKRAAQ…EYIINLQSRL (64 aa). A basic motif region spans residues 103 to 126; the sequence is LSTSKRAAQNRAAQRAFRQRKESY. The segment covering 108 to 118 has biased composition (low complexity); it reads RAAQNRAAQRA. Residues 130–161 are leucine-zipper; it reads LEEQVKEFDTMSEAFKALQAENYQLREYIINL. The interval 174-284 is disordered; sequence ELPGNIDLSQ…QAPHGLPMVS (111 aa). Over residues 193 to 222 the composition is skewed to low complexity; sequence PGAGPATTSSSAPAPPSGAQQAQPPQGAAS.

The protein belongs to the bZIP family.

It localises to the nucleus. Its function is as follows. Putative transcription factor. This Aspergillus oryzae (strain ATCC 42149 / RIB 40) (Yellow koji mold) protein is Putative transcription factor kapC (kapC).